A 277-amino-acid polypeptide reads, in one-letter code: E3 ubiquitin-protein ligase CCNB1IP1 (277 aa).

An RING-type; atypical zinc finger spans residues 4–51 (CEDMLLCNYRKCRIKLSGYAWVTACSHIFCDQHGSGEFSRSPAICPAC). Residues 127-182 (QQIQSKDVELTSMKGEVTSMKKVLEEYKKKFSDISEKLMERNRQYQKLQGLYDSLR) adopt a coiled-coil conformation.

As to quaternary structure, interacts with CCNB1, UBE2L3 and NF2. Post-translationally, ubiquitinated; autoubiquitinated. In terms of processing, phosphorylated by CDK1 on serine or threonine residues (in vitro). Highly expressed in heart. Detected at intermediate levels in liver and kidney, and at low levels in placenta, brain and lung.

The protein resides in the nucleus. The protein localises to the chromosome. It carries out the reaction S-ubiquitinyl-[E2 ubiquitin-conjugating enzyme]-L-cysteine + [acceptor protein]-L-lysine = [E2 ubiquitin-conjugating enzyme]-L-cysteine + N(6)-ubiquitinyl-[acceptor protein]-L-lysine.. Its pathway is protein modification; protein ubiquitination. Its function is as follows. Ubiquitin E3 ligase that acts as a limiting factor for crossing-over during meiosis: required during zygonema to limit the colocalization of RNF212 with MutS-gamma-associated recombination sites and thereby establish early differentiation of crossover and non-crossover sites. Later, it is directed by MutL-gamma to stably accumulate at designated crossover sites. Probably promotes the dissociation of RNF212 and MutS-gamma to allow the progression of recombination and the implementation of the final steps of crossing over. Modulates cyclin-B levels and participates in the regulation of cell cycle progression through the G2 phase. Overexpression causes delayed entry into mitosis. The polypeptide is E3 ubiquitin-protein ligase CCNB1IP1 (CCNB1IP1) (Homo sapiens (Human)).